We begin with the raw amino-acid sequence, 80 residues long: Protein UL148B (80 aa).

Residues 10 to 30 form a helical membrane-spanning segment; that stretch reads AICVGLVMGVTVIASCALLVF.

It localises to the host membrane. This chain is Protein UL148B (UL148B), found in Homo sapiens (Human).